The sequence spans 453 residues: AP-4 complex subunit mu-1 (453 aa).

The 269-residue stretch at 184-452 (KNEVFLDVVE…LSHSDAYVIR (269 aa)) folds into the MHD domain.

It belongs to the adaptor complexes medium subunit family. Adaptor protein complex 4 (AP-4) is a heterotetramer composed of two large adaptins (epsilon-type subunit AP4E1 and beta-type subunit AP4B1), a medium adaptin (mu-type subunit AP4M1) and a small adaptin (sigma-type AP4S1). Interacts with tyrosine-based sorting signals on the cytoplasmic tail of cargo proteins such as APP, ATG9A, LAMP2 and NAGPA. Interacts with the C-terminal domain of GRID2. Interacts with GRIA1 and GRIA2; the interaction is indirect via CACNG3. Interacts with CACNG3; CACNG3 associates GRIA1 and GRIA2 with the adaptor protein complex 4 (AP-4) to target them to the somatodendritic compartment of neurons. Interacts with HOOK1 and HOOK2; the interactions are direct, mediate the interaction between FTS-Hook-FHIP (FHF) complex and AP-4 and the perinuclear distribution of AP-4. In terms of tissue distribution, ubiquitous. Highly expressed in testis and lowly expressed in brain and lung.

Its subcellular location is the golgi apparatus. It localises to the trans-Golgi network membrane. The protein localises to the early endosome. Functionally, component of the adaptor protein complex 4 (AP-4). Adaptor protein complexes are vesicle coat components involved both in vesicle formation and cargo selection. They control the vesicular transport of proteins in different trafficking pathways. AP-4 forms a non clathrin-associated coat on vesicles departing the trans-Golgi network (TGN) and may be involved in the targeting of proteins from the trans-Golgi network (TGN) to the endosomal-lysosomal system. It is also involved in protein sorting to the basolateral membrane in epithelial cells and the proper asymmetric localization of somatodendritic proteins in neurons. Within AP-4, the mu-type subunit AP4M1 is directly involved in the recognition and binding of tyrosine-based sorting signals found in the cytoplasmic part of cargos. The adaptor protein complex 4 (AP-4) may also recognize other types of sorting signal. This is AP-4 complex subunit mu-1 from Homo sapiens (Human).